The following is a 385-amino-acid chain: Glucans biosynthesis protein C (385 aa).

Transmembrane regions (helical) follow at residues 17-37, 60-80, 91-111, 137-157, 173-193, 212-232, 239-259, 274-294, 311-331, and 338-358; these read AWLMLLGIPFHISLIYSSHTW, MQVFFVISGYFSYMLFLRYPL, VGIPMLTAIPLLTLPQFIMLQ, ISHLWFLLVLVVMTTLCVWIF, KFSMVKLSVIFLCLGIGYAVI, FIVMQTLFYLPFFILGALAFI, LFTTPSRGCTLAAALAFVAYL, TESVITMVLGLWMVNVVFSFG, ASLFIYLVHHPLTLFFGAYIT, and WLGFLCGLIFVVGIAIILYEI.

Belongs to the acyltransferase 3 family. OpgC subfamily.

The protein localises to the cell membrane. Its pathway is glycan metabolism; osmoregulated periplasmic glucan (OPG) biosynthesis. Functionally, necessary for the succinyl substitution of periplasmic glucans. Could catalyze the transfer of succinyl residues from the cytoplasmic side of the membrane to the nascent glucan backbones on the periplasmic side of the membrane. The sequence is that of Glucans biosynthesis protein C from Escherichia coli (strain SMS-3-5 / SECEC).